The sequence spans 323 residues: Estradiol 17 beta-dehydrogenase 5 (323 aa).

NADP(+) is bound by residues 20–24 and aspartate 50; that span reads GFGTY. Catalysis depends on tyrosine 55, which acts as the Proton donor. Histidine 117 provides a ligand contact to substrate. Residues 166-167, glutamine 190, 216-221, and 270-280 each bind NADP(+); these read SN, YSALGS, and KSFSEKRIKEN.

The protein belongs to the aldo/keto reductase family. Monomer. Three forms are detected, probably due to post-translational modifications. Mainly found in liver. Also expressed weakly in kidney.

Functionally, active toward androgens, estrogens, and xenobiotic substrates. Also exhibits low 20 alpha-HSD activity. Shows a-stereospecificity in hydrogen transfer between cofactors and substrates (A-specific). Preferentially catalyzes the reduction of 4-androstenedione, 5-alpha-androstane-3,17-dione, androsterone and dehydroepiandrosterone to testosterone, dihydrotestosterone, 5-alpha-androstane-3-alpha,17-beta-diol and 5-androstene-3-beta,17-beta-diol, respectively. The chain is Estradiol 17 beta-dehydrogenase 5 (Akr1c6) from Mus musculus (Mouse).